Reading from the N-terminus, the 323-residue chain is MAVPPVEMYSGSFWNRMRKPLPLRTQVIRFTVVFVIVSFILAVALQITHERMPDPKVTKPLPDLGFEVLHKYPFLFSVADCCIGFLNILSVFTAFKLYLLHRHCVGSGEPELPCNIPGVSRFFLSVWLCKENCRIELRNVHTIAWIRFITSYALLLLSRSVIMVVTSLPNPDDLCQDPPKIENRVKDVILTVLTAGAGSIHCGDLMYSGHTVILTLHLMFHWIYGAMVHWSFRPVVTVVAIFGYYCIVASRFHYTDDVLVAIYLTIATFIAVGHNADGAPWQLQLFIRWLPCCGANSREVTEDGVPVAIVIKNEEMMNFEGKS.

The Cytoplasmic segment spans residues 1–26; sequence MAVPPVEMYSGSFWNRMRKPLPLRTQ. Residues 27–47 form a helical membrane-spanning segment; the sequence is VIRFTVVFVIVSFILAVALQI. Over 48–73 the chain is Extracellular; that stretch reads THERMPDPKVTKPLPDLGFEVLHKYP. Residues 74–94 form a helical membrane-spanning segment; it reads FLFSVADCCIGFLNILSVFTA. Residues 95–147 are Cytoplasmic-facing; the sequence is FKLYLLHRHCVGSGEPELPCNIPGVSRFFLSVWLCKENCRIELRNVHTIAWIR. The helical transmembrane segment at 148–168 threads the bilayer; the sequence is FITSYALLLLSRSVIMVVTSL. At 169–211 the chain is on the extracellular side; sequence PNPDDLCQDPPKIENRVKDVILTVLTAGAGSIHCGDLMYSGHT. H210 is a catalytic residue. Residues 212 to 232 traverse the membrane as a helical segment; sequence VILTLHLMFHWIYGAMVHWSF. Residue R233 is a topological domain, cytoplasmic. Residues 234–254 traverse the membrane as a helical segment; sequence PVVTVVAIFGYYCIVASRFHY. Catalysis depends on residues H253 and D257. Residues 255–257 are Extracellular-facing; the sequence is TDD. The helical transmembrane segment at 258–278 threads the bilayer; sequence VLVAIYLTIATFIAVGHNADG. Topologically, residues 279-323 are cytoplasmic; the sequence is APWQLQLFIRWLPCCGANSREVTEDGVPVAIVIKNEEMMNFEGKS.

It belongs to the sphingomyelin synthase family.

It is found in the membrane. Bidirectional lipid ethanolaminephosphotransferase capable of converting phosphatidylethanolamine (PE) and ceramide to ethanolamine-phosphorylceramide (EPC) and diacylglycerol (DAG) and vice versa. Direction is dependent on the relative concentrations of DAG and ceramide as phosphoethanolamine acceptors. Does not function strictly as a SM synthase. Essential for viability of the pathogenic bloodstream stage of this human protozoan parasite and, consequently, can be considered as potential drug target. The sequence is that of Phosphatidylethanolamine:ceramide ethanolaminephosphotransferase from Trypanosoma brucei brucei (strain 927/4 GUTat10.1).